Consider the following 463-residue polypeptide: Methionine aminopeptidase 2-1 (463 aa).

A disordered region spans residues 1–98 (MGSKTPEEQI…PPRVPLSDLF (98 aa)). A compositionally biased stretch (basic and acidic residues) spans 30-45 (RGTHLSRDGDGSLGDH). Residues 46–55 (GDDDDADEDD) show a composition bias toward acidic residues. Basic residues predominate over residues 69-81 (KKKKRPKKKKKPA). H214 is a binding site for substrate. Positions 235, 246, and 315 each coordinate a divalent metal cation. Residue H323 coordinates substrate. Residues E348 and E444 each contribute to the a divalent metal cation site.

It belongs to the peptidase M24A family. Methionine aminopeptidase eukaryotic type 2 subfamily. The cofactor is Co(2+). Requires Zn(2+) as cofactor. Mn(2+) is required as a cofactor. Fe(2+) serves as cofactor.

It localises to the cytoplasm. The enzyme catalyses Release of N-terminal amino acids, preferentially methionine, from peptides and arylamides.. Cotranslationally removes the N-terminal methionine from nascent proteins. The N-terminal methionine is often cleaved when the second residue in the primary sequence is small and uncharged (Met-Ala-, Cys, Gly, Pro, Ser, Thr, or Val). The polypeptide is Methionine aminopeptidase 2-1 (Colletotrichum graminicola (strain M1.001 / M2 / FGSC 10212) (Maize anthracnose fungus)).